The following is a 240-amino-acid chain: tRNA pseudouridine synthase B (240 aa).

Aspartate 48 (nucleophile) is an active-site residue.

This sequence belongs to the pseudouridine synthase TruB family. Type 1 subfamily.

The catalysed reaction is uridine(55) in tRNA = pseudouridine(55) in tRNA. In terms of biological role, responsible for synthesis of pseudouridine from uracil-55 in the psi GC loop of transfer RNAs. The chain is tRNA pseudouridine synthase B from Bacteroides thetaiotaomicron (strain ATCC 29148 / DSM 2079 / JCM 5827 / CCUG 10774 / NCTC 10582 / VPI-5482 / E50).